The sequence spans 602 residues: UvrABC system protein C (602 aa).

The GIY-YIG domain maps to 19 to 97 (EEPGVYRMIG…IKSLAPRYNI (79 aa)). In terms of domain architecture, UVR spans 206 to 241 (SEVIDDLTARMHAAAERLAFEEAAACRDQVRVLQAV).

Belongs to the UvrC family. Interacts with UvrB in an incision complex.

It is found in the cytoplasm. Functionally, the UvrABC repair system catalyzes the recognition and processing of DNA lesions. UvrC both incises the 5' and 3' sides of the lesion. The N-terminal half is responsible for the 3' incision and the C-terminal half is responsible for the 5' incision. The polypeptide is UvrABC system protein C (Aromatoleum aromaticum (strain DSM 19018 / LMG 30748 / EbN1) (Azoarcus sp. (strain EbN1))).